The chain runs to 212 residues: Large ribosomal subunit protein uL3 (212 aa).

Gln153 bears the N5-methylglutamine mark.

It belongs to the universal ribosomal protein uL3 family. Part of the 50S ribosomal subunit. Forms a cluster with proteins L14 and L19. Methylated by PrmB.

Its function is as follows. One of the primary rRNA binding proteins, it binds directly near the 3'-end of the 23S rRNA, where it nucleates assembly of the 50S subunit. This is Large ribosomal subunit protein uL3 from Shewanella denitrificans (strain OS217 / ATCC BAA-1090 / DSM 15013).